A 306-amino-acid chain; its full sequence is uncharacterized protein (306 aa).

The next 9 membrane-spanning stretches (helical) occupy residues V6 to I26, H37 to T57, I67 to I87, T91 to L111, W125 to F145, S148 to F168, G177 to L197, L213 to V233, and A251 to L271. EamA domains are found at residues G17–F140 and F160–L285.

Belongs to the EamA transporter family.

It is found in the cell membrane. This is an uncharacterized protein from Bacillus subtilis (strain 168).